The chain runs to 323 residues: Type II restriction enzyme BsoBI (323 aa).

Mg(2+)-binding residues include aspartate 212, glutamate 240, and lysine 242.

As to quaternary structure, homodimer.

It catalyses the reaction Endonucleolytic cleavage of DNA to give specific double-stranded fragments with terminal 5'-phosphates.. A P subtype restriction enzyme that recognizes the double-stranded sequence 5'-CYCGRG-3' and cleaves after C-1. The protein is Type II restriction enzyme BsoBI of Geobacillus stearothermophilus (Bacillus stearothermophilus).